Reading from the N-terminus, the 287-residue chain is ATP synthase gamma chain (287 aa).

The protein belongs to the ATPase gamma chain family. As to quaternary structure, F-type ATPases have 2 components, CF(1) - the catalytic core - and CF(0) - the membrane proton channel. CF(1) has five subunits: alpha(3), beta(3), gamma(1), delta(1), epsilon(1). CF(0) has three main subunits: a, b and c.

The protein resides in the cell membrane. Produces ATP from ADP in the presence of a proton gradient across the membrane. The gamma chain is believed to be important in regulating ATPase activity and the flow of protons through the CF(0) complex. This chain is ATP synthase gamma chain, found in Brevibacillus brevis (strain 47 / JCM 6285 / NBRC 100599).